Here is a 455-residue protein sequence, read N- to C-terminus: MTTSGHACPVPAVNGHMTHYPATPYPLLFPPVIGGLSLPPLHGLHGHPPPSGCSTPSPATIETQSTSSEELVPSPPSPLPPPRVYKPCFVCQDKSSGYHYGVSACEGCKGFFRRSIQKNMIYTCHRDKNCVINKVTRNRCQYCRLQKCFEVGMSKESVRNDRNKKKKETSKQECTESYEMTAELDDLTEKIRKAHQETFPSLCQLGKYTTNSSADHRVRLDLGLWDKFSELATKCIIKIVEFAKRLPGFTGLTIADQITLLKAACLDILILRICTRYTPEQDTMTFSDGLTLNRTQMHNAGFGPLTDLVFTFANQLLPLEMDDTETGLLSAICLICGDRQDLEEPTKVDKLQEPLLEALKIYIRKRRPSKPHMFPKILMKITDLRSISAKGAERVITLKMEIPGSMPPLIQEMLENSEGHEPLTPSSSGNTAEHSPSISPSSVENSGVSQSPLVQ.

A modulating region spans residues 1-87; the sequence is MTTSGHACPV…PLPPPRVYKP (87 aa). Residues 47 to 78 are disordered; sequence HPPPSGCSTPSPATIETQSTSSEELVPSPPSP. Residues 53–66 show a composition bias toward polar residues; that stretch reads CSTPSPATIETQST. A Phosphoserine modification is found at Ser77. 2 NR C4-type zinc fingers span residues 88–108 and 124–148; these read CFVC…CEGC and CHRD…LQKC. Positions 88 to 153 form a DNA-binding region, nuclear receptor; that stretch reads CFVCQDKSSG…RLQKCFEVGM (66 aa). Positions 154 to 182 are hinge; sequence SKESVRNDRNKKKKETSKQECTESYEMTA. The NR LBD domain occupies 183–417; it reads ELDDLTEKIR…PLIQEMLENS (235 aa). Residues 415–455 form a disordered region; the sequence is ENSEGHEPLTPSSSGNTAEHSPSISPSSVENSGVSQSPLVQ. Positions 424 to 434 are enriched in polar residues; it reads TPSSSGNTAEH. The span at 435–455 shows a compositional bias: low complexity; that stretch reads SPSISPSSVENSGVSQSPLVQ.

The protein belongs to the nuclear hormone receptor family. NR1 subfamily. In terms of assembly, homodimer. Heterodimer; with a RXR molecule. Binds DNA preferentially as a RAR/RXR heterodimer. Heterodimerizes (via NR LBD) with RXRA. Interacts weakly with NCOR2. In terms of tissue distribution, expressed in aortic endothelial cells (at protein level).

It localises to the nucleus. Its subcellular location is the cytoplasm. Receptor for retinoic acid. Retinoic acid receptors bind as heterodimers to their target response elements in response to their ligands, all-trans or 9-cis retinoic acid, and regulate gene expression in various biological processes. The RXR/RAR heterodimers bind to the retinoic acid response elements (RARE) composed of tandem 5'-AGGTCA-3' sites known as DR1-DR5. In the absence or presence of hormone ligand, acts mainly as an activator of gene expression due to weak binding to corepressors. The RXRA/RARB heterodimer can act as a repressor on the DR1 element and as an activator on the DR5 element. In concert with RARG, required for skeletal growth, matrix homeostasis and growth plate function. The protein is Retinoic acid receptor beta (RARB) of Homo sapiens (Human).